A 216-amino-acid chain; its full sequence is Ribosomal RNA small subunit methyltransferase G (216 aa).

S-adenosyl-L-methionine-binding positions include G83, M88, 134–135, and R149; that span reads VE.

This sequence belongs to the methyltransferase superfamily. RNA methyltransferase RsmG family.

It localises to the cytoplasm. The enzyme catalyses guanosine(527) in 16S rRNA + S-adenosyl-L-methionine = N(7)-methylguanosine(527) in 16S rRNA + S-adenosyl-L-homocysteine. Functionally, specifically methylates the N7 position of guanine in position 527 of 16S rRNA. In Pseudomonas putida (strain GB-1), this protein is Ribosomal RNA small subunit methyltransferase G.